We begin with the raw amino-acid sequence, 312 residues long: Ribosomal RNA small subunit methyltransferase H (312 aa).

S-adenosyl-L-methionine-binding positions include 36-38, Asp55, Phe81, Asp103, and Gln110; that span reads GGH.

It belongs to the methyltransferase superfamily. RsmH family.

The protein resides in the cytoplasm. It catalyses the reaction cytidine(1402) in 16S rRNA + S-adenosyl-L-methionine = N(4)-methylcytidine(1402) in 16S rRNA + S-adenosyl-L-homocysteine + H(+). Specifically methylates the N4 position of cytidine in position 1402 (C1402) of 16S rRNA. The polypeptide is Ribosomal RNA small subunit methyltransferase H (Marinomonas sp. (strain MWYL1)).